Here is a 929-residue protein sequence, read N- to C-terminus: Band 3 anion transport protein (929 aa).

Methionine 1 bears the N-acetylmethionine mark. The Cytoplasmic segment spans residues 1-422; it reads MGDMRDHEEV…LSDITDALSP (422 aa). Serine 18 is modified (phosphoserine). Residues tyrosine 31 and tyrosine 56 each carry the phosphotyrosine modification. The segment at 46-67 is disordered; that stretch reads ALPTEQTATDYVPSSTSTPHPS. The segment covering 58–67 has biased composition (low complexity); sequence PSSTSTPHPS. The tract at residues 69–303 is globular; the sequence is GQVYVELQEL…LGRAAATLMT (235 aa). Residues 190–199 are interaction with ANK1; sequence AVLTRSGGAS. 3 positions are modified to phosphoserine: serine 199, serine 222, and serine 363. Residues 317-370 form a dimerization arm region; the sequence is REELLRSLESFLDCSLVLPPTDAPSEKALLNLVPVQKELLRRRYLPSPAKPDPN. A disordered region spans residues 366 to 389; sequence KPDPNLYNTLDLNGGKGGPGDEDD. Residue tyrosine 372 is modified to Phosphotyrosine. A Phosphothreonine modification is found at threonine 374. A helical transmembrane segment spans residues 423–446; that stretch reads QVLAAVIFIYFAALSPAVTFGGLL. At 447 to 454 the chain is on the extracellular side; the sequence is GEKTRNLM. Residues 455–475 traverse the membrane as a helical segment; the sequence is GVSELLISTAVQGILFALLGA. Topologically, residues 476 to 478 are cytoplasmic; sequence QPL. Residues 479–495 form a discontinuously helical membrane-spanning segment; sequence LVLGFSGPLLVFEEAFF. Over 496-504 the chain is Extracellular; it reads SFCESNNLE. A helical membrane pass occupies residues 505-525; that stretch reads YIVGRAWIGFWLILLVMLVVA. Residues 526 to 537 lie on the Cytoplasmic side of the membrane; sequence FEGSFLVQYISR. Residues 538-560 traverse the membrane as a helical segment; the sequence is YTQEIFSFLISLIFIYETFSKLI. Over 561 to 588 the chain is Extracellular; that stretch reads KIFQDYPLQQTYAPVVMKPKPQGPVPNT. Residues 589 to 609 form a helical membrane-spanning segment; the sequence is ALFSLVLMAGTFLLAMTLRKF. At 610–620 the chain is on the cytoplasmic side; it reads KNSTYFPGKLR. A helical transmembrane segment spans residues 621-641; that stretch reads RVIGDFGVPISILIMVLVDSF. Residues 642 to 681 are Extracellular-facing; it reads IKGTYTQKLSVPDGLKVSNSSARGWVIHPLGLYRLFPTWM. An N-linked (GlcNAc...) asparagine glycan is attached at asparagine 660. A helical membrane pass occupies residues 682-702; it reads MFASVLPALLVFILIFLESQI. The Cytoplasmic segment spans residues 703–718; that stretch reads TTLIVSKPERKMIKGS. Residues 719–737 traverse the membrane as a helical segment; that stretch reads GFHLDLLLVVGMGGVAALF. The discontinuously helical transmembrane segment at 738–755 threads the bilayer; it reads GMPWLSATTVRSVTHANA. The Cytoplasmic portion of the chain corresponds to 756–778; the sequence is LTVMGKASGPGAAAQIQEVKEQR. The next 2 helical transmembrane spans lie at 779–799 and 800–818; these read ISGLLVSVLVGLSILMEPILS and RIPLAVLFGIFLYMGVTSL. Over 819-856 the chain is Cytoplasmic; that stretch reads SGIQLFDRILLLFKPPKYHPDVPFVKRVKTWRMHLFTG. An intramembrane region (discontinuously helical) is located at residues 857–887; the sequence is IQIICLAVLWVVKSTPASLALPFVLILTVPL. Residue cysteine 861 is the site of S-palmitoyl cysteine attachment. Over 888-929 the chain is Cytoplasmic; that stretch reads RRLILPLIFRELELQCLDGDDAKVTFDEENGLDEYDEVPMPV. Position 922 is a phosphotyrosine (tyrosine 922).

The protein belongs to the anion exchanger (TC 2.A.31) family. In terms of assembly, a dimer in solution, but in its membrane environment, it exists primarily as a mixture of dimers and tetramers and spans the membrane asymmetrically. Component of the ankyrin-1 complex in the erythrocyte, composed of ANK1, RHCE, RHAG, SLC4A1, EPB42, GYPA, GYPB and AQP1. Interacts with STOM; this interaction positively regulates SLC4A1 activity. Interacts with GYPA; a GYPA monomer is bound at each end of the SLC4A1 dimer forming a heterotetramer. Three SLC4A1 dimers (Band 3-I, Band 3-II and Band 3-III) participates in the ankyrin-1 complex. Interacts (via the cytoplasmic domain) with EPB42; this interaction is mediated by the SLC4A1 Band 3-I dimer. Interacts (via the cytoplasmic domain) directly with ANK1; this interaction is mediated by the SLC4A1 Band 3-II and Band 3-III dimers. Interacts with TMEM139. As to expression, detected in erythrocytes (at protein level).

The protein resides in the cell membrane. It localises to the basolateral cell membrane. The catalysed reaction is hydrogencarbonate(in) + chloride(out) = hydrogencarbonate(out) + chloride(in). Functions both as a transporter that mediates electroneutral anion exchange across the cell membrane and as a structural protein. Component of the ankyrin-1 complex of the erythrocyte membrane; required for normal flexibility and stability of the erythrocyte membrane and for normal erythrocyte shape via the interactions of its cytoplasmic domain with cytoskeletal proteins, glycolytic enzymes, and hemoglobin. Functions as a transporter that mediates the 1:1 exchange of inorganic anions across the erythrocyte membrane. Mediates chloride-bicarbonate exchange in the kidney, and is required for normal acidification of the urine. The chain is Band 3 anion transport protein from Mus musculus (Mouse).